The following is a 504-amino-acid chain: Glucose-6-phosphate isomerase (504 aa).

The active-site Proton donor is the E333. Active-site residues include H364 and K473.

The protein belongs to the GPI family.

It is found in the cytoplasm. The catalysed reaction is alpha-D-glucose 6-phosphate = beta-D-fructose 6-phosphate. It participates in carbohydrate biosynthesis; gluconeogenesis. Its pathway is carbohydrate degradation; glycolysis; D-glyceraldehyde 3-phosphate and glycerone phosphate from D-glucose: step 2/4. In terms of biological role, catalyzes the reversible isomerization of glucose-6-phosphate to fructose-6-phosphate. The polypeptide is Glucose-6-phosphate isomerase (Xanthomonas oryzae pv. oryzae (strain PXO99A)).